We begin with the raw amino-acid sequence, 212 residues long: Ribosomal RNA small subunit methyltransferase G (212 aa).

Residues Gly-80, Leu-85, 131 to 132 (AE), and Arg-146 contribute to the S-adenosyl-L-methionine site.

This sequence belongs to the methyltransferase superfamily. RNA methyltransferase RsmG family.

It is found in the cytoplasm. The catalysed reaction is guanosine(527) in 16S rRNA + S-adenosyl-L-methionine = N(7)-methylguanosine(527) in 16S rRNA + S-adenosyl-L-homocysteine. Its function is as follows. Specifically methylates the N7 position of guanine in position 527 of 16S rRNA. This Xanthomonas axonopodis pv. citri (strain 306) protein is Ribosomal RNA small subunit methyltransferase G.